A 197-amino-acid chain; its full sequence is Beta-crystallin A2 (197 aa).

Positions Met-1–Pro-11 are N-terminal arm. 2 consecutive Beta/gamma crystallin 'Greek key' domains span residues Ala-12–Ser-52 and Gly-53–Leu-99. Positions Cys-100–Asp-105 are connecting peptide. 2 Beta/gamma crystallin 'Greek key' domains span residues Ser-106 to Ser-147 and Gly-148 to Gln-196.

Belongs to the beta/gamma-crystallin family. In terms of assembly, homo/heterodimer, or complexes of higher-order. The structure of beta-crystallin oligomers seems to be stabilized through interactions between the N-terminal arms.

Crystallins are the dominant structural components of the vertebrate eye lens. This chain is Beta-crystallin A2 (CRYBA2), found in Macropus fuliginosus (Western gray kangaroo).